The sequence spans 552 residues: Glutamine-dependent NAD(+) synthetase (552 aa).

The CN hydrolase domain maps to 5-245; sequence FRITLAQLNP…EAVVHVDLER (241 aa). Glu45 (proton acceptor; for glutaminase activity) is an active-site residue. The active-site For glutaminase activity is Lys113. Catalysis depends on Cys149, which acts as the Nucleophile; for glutaminase activity. Positions 175 and 181 each coordinate L-glutamine. The tract at residues 275–552 is ligase; that stretch reads LQDYLRKSGF…PMVNRWRDQS (278 aa). ATP is bound at residue 290 to 297; sequence GLSGGIDS. Asn373 serves as a coordination point for deamido-NAD(+). Position 397 (Thr397) interacts with ATP. Deamido-NAD(+) contacts are provided by Glu402 and Lys521.

It in the C-terminal section; belongs to the NAD synthetase family.

The catalysed reaction is deamido-NAD(+) + L-glutamine + ATP + H2O = L-glutamate + AMP + diphosphate + NAD(+) + H(+). It participates in cofactor biosynthesis; NAD(+) biosynthesis; NAD(+) from deamido-NAD(+) (L-Gln route): step 1/1. Functionally, catalyzes the ATP-dependent amidation of deamido-NAD to form NAD. Uses L-glutamine as a nitrogen source. The chain is Glutamine-dependent NAD(+) synthetase from Rhodobacter capsulatus (Rhodopseudomonas capsulata).